The primary structure comprises 279 residues: NH(3)-dependent NAD(+) synthetase (279 aa).

46–53 contacts ATP; it reads GISGGQDS. D52 provides a ligand contact to Mg(2+). Position 145 (R145) interacts with deamido-NAD(+). Residue T165 coordinates ATP. E170 lines the Mg(2+) pocket. The deamido-NAD(+) site is built by K178 and D185. ATP contacts are provided by K194 and T216. 265-266 provides a ligand contact to deamido-NAD(+); sequence HK.

The protein belongs to the NAD synthetase family. Homodimer.

It catalyses the reaction deamido-NAD(+) + NH4(+) + ATP = AMP + diphosphate + NAD(+) + H(+). The protein operates within cofactor biosynthesis; NAD(+) biosynthesis; NAD(+) from deamido-NAD(+) (ammonia route): step 1/1. Catalyzes the ATP-dependent amidation of deamido-NAD to form NAD. Uses ammonia as a nitrogen source. The protein is NH(3)-dependent NAD(+) synthetase of Rhodococcus jostii (strain RHA1).